The primary structure comprises 362 residues: MTTLMGSYSWTESLDCSPMDGDLSDGLSPHRSPREKGSETRIRRPMNAFMVWAKDERKRLAVQNPDLHNAELSKMLGKSWKALSPAQKRPYVEEAERLRVQHMQDYPNYKYRPRRKKQIKRICKRVDTGFLLGSLSKDQNSVPDTRGCRTAMEKEENGGYPGAALSDIRHYRETPSNGNKYDQTYPYGLPTPPEMSPLEAIDQDQSFYSTSCSEDCHSHINGAVYPPEYSRSPILCSHLSQVPIPQPGSSMIPPVPTCPPAYYSSSYHSIHNYHAHLGQLSPPPEHPHYDTIDQISQAELLGEMDRNEFDQYLNTSLQDPTEMTIHGHVQVSQASDIQPSETSLISVLADATATYYNSYSVS.

Positions 19–41 (MDGDLSDGLSPHRSPREKGSETR) are disordered. The span at 32–41 (SPREKGSETR) shows a compositional bias: basic and acidic residues. The HMG box DNA-binding region spans 42-110 (IRRPMNAFMV…QHMQDYPNYK (69 aa)). The Sox C-terminal domain occupies 246–362 (QPGSSMIPPV…ATYYNSYSVS (117 aa)).

In terms of tissue distribution, localized to the vegetal hemisphere of blastula embryos. Tissue-specific expression in early neurula (stage 13-14) embryos begins in the ciliate cells of the epidermis. Starting about stage 24, expression is found in a lateral stripe on each side of the embryo, with expression extending more posteriorly as development proceeds. Expressed in embryonic vasculature, as well as in the procardia tube, endocardium, notochord and hindbrain. As development proceeds, strong expression is seen in the hindbrain, posterior cardinal veins, aortic arch, stomodeal depression, epithelium and intersomitic arteries of stage 33/34 larvae. Expressed in posterior rhombomeres. By stage 40 larvae, expression in most of the vascular endothelia disappears, in particular in the posterior cardinal vein, but expression continues in the hindbrain. Expressed in a wide range of adult tissues, including ovary, testis, kidney, bladder, duodenum and liver.

It is found in the nucleus. In terms of biological role, transcription factor. Binds to the DNA sequence 5'-AACAAT-3'. Acts downstream of vegt and upstream of nodal signaling to promote endodermal and mesodermal differentiation by promoting vegt-induced expression of both endodermal genes (including endodermin) and mesodermal genes (including snai1/snail and snai2/slug). Induces expression of multiple nodal genes (including nodal, nodal2, nodal4, nodal5 and nodal6) and binds directly to sites within the promoter of the nodal5 gene. The endodermal and mesodermal specification pathways then interact to initiate cardiogenesis. Acts partially redundantly with sox18 during cardiogenesis. Also acts as an antagonist of beta-catenin signaling. Regulates (possibly indirectly) development of the pronephros, the functional larval kidney. This Xenopus laevis (African clawed frog) protein is Transcription factor Sox-7 (sox7).